The following is a 418-amino-acid chain: MDIGDFVKLELENTTYSGTVMPSLNEDTVVIKMKSGYNVGIDKKKIKNIEILESGDKPKYGLPPLNLEKNPKLKNISILSTGGTVASRVDYKTGAVHPAFTADDLIRAVPELMDVANIKGKVILNILSENMLPKYWVMTADAIKEEIENGAEGIVIAHGTDTMHYTASALSFMVNSEVPIILVGAQRSSDRPSSDAALNIIAAVKAATEPIKGVYVLMHGETGDTVCHLHEGTKVRKLHSSRRDAFKSVNETPIAEVNPFTKKVTYLREVKSQDRSKIKEVVLNTNLEEKVALIKVYPGIDSEILKFYVDNGYKGIILEGTGLGHTPETFFEGIDYANENNVLVAMTTQTINGRVNMNVYSNGRELQAKGVIPCEDMLSEVAFVKLMHLLGNYEFKEAKELMSKNIAGEINESINLEC.

In terms of domain architecture, Asparaginase/glutaminase spans 74 to 405 (KNISILSTGG…KEAKELMSKN (332 aa)). Active-site residues include threonine 84, threonine 160, aspartate 161, and lysine 237.

Belongs to the asparaginase 1 family. GatD subfamily. In terms of assembly, heterodimer of GatD and GatE.

It carries out the reaction L-glutamyl-tRNA(Gln) + L-glutamine + ATP + H2O = L-glutaminyl-tRNA(Gln) + L-glutamate + ADP + phosphate + H(+). Functionally, allows the formation of correctly charged Gln-tRNA(Gln) through the transamidation of misacylated Glu-tRNA(Gln) in organisms which lack glutaminyl-tRNA synthetase. The reaction takes place in the presence of glutamine and ATP through an activated gamma-phospho-Glu-tRNA(Gln). The GatDE system is specific for glutamate and does not act on aspartate. This Methanococcus maripaludis (strain DSM 14266 / JCM 13030 / NBRC 101832 / S2 / LL) protein is Glutamyl-tRNA(Gln) amidotransferase subunit D.